A 515-amino-acid polypeptide reads, in one-letter code: MVQPYRHEPLTDFTVEANREAFLAALKKVESELGRDYPLVIGGERVMTEDKIISINPANKTEVVGRVAKANKELAERAMKTADEAFRTWSRTSPEARADILFRAAAIVRRRKHEFSAWLVKEAGKPWREADADTAEAIDFMEYYGRQMLKLKDGIPVESRPGETNRFFYIPLGVGVVISPWNFPFAIMAGTTVASLVTGNTVLLKPASATPVVAYKFVEVLEEAGLPAGVLNYIPGSGAEVGDYLVDHPRTRFISFTGSRDVGIRIYERAAKVHPGQIWLKRVIAEMGGKDAIVVDKEADLELAAQSIVASAFGFSGQKCSACSRAIIVEDVYDQVLSRVVELTKQLNVGDPAEQATFMGPVIDQNAYNKIMEYIEIGKQEGRLMTGGEGDDAKGFFIQPTVFADVDPNARIMQEEIFGPVVAFAKARDFDHALEIANNTEYGLTGAVISRNRANLEKARHEFHVGNLYFNRGCTGAIVGYQPFGGFNMSGTDSKAGGPDYLILHMQAKTVSEMF.

Active-site residues include E286 and C320.

It belongs to the aldehyde dehydrogenase family. RocA subfamily.

It catalyses the reaction L-glutamate 5-semialdehyde + NAD(+) + H2O = L-glutamate + NADH + 2 H(+). It functions in the pathway amino-acid degradation; L-proline degradation into L-glutamate; L-glutamate from L-proline: step 2/2. In Geobacillus kaustophilus (strain HTA426), this protein is 1-pyrroline-5-carboxylate dehydrogenase.